Here is a 296-residue protein sequence, read N- to C-terminus: Protoheme IX farnesyltransferase (296 aa).

The Cytoplasmic segment spans residues 1-9; that stretch reads MMFKQYLQV. The chain crosses the membrane as a helical span at residues 10–28; sequence TKPGIIFGNLISVIGGFLL. The Periplasmic portion of the chain corresponds to 29 to 37; that stretch reads ASKGSIDYP. The chain crosses the membrane as a helical span at residues 38-56; that stretch reads LFIYTLVGVSLVVASGCVF. At 57–78 the chain is on the cytoplasmic side; the sequence is NNYIDRDIDRKMERTKNRVLVK. The helical transmembrane segment at 79-97 threads the bilayer; sequence GLISPAVSLVYATLLGFAG. At 98-107 the chain is on the periplasmic side; it reads FMLLWFGANP. Residues 108–126 traverse the membrane as a helical segment; that stretch reads LACWLGVMGFVVYVGVYSL. At 127-197 the chain is on the cytoplasmic side; it reads YMKRHSVYGT…YQAANIPVLP (71 aa). A helical transmembrane segment spans residues 198 to 216; it reads VVKGISVAKNHITLYIIAF. The Periplasmic portion of the chain corresponds to 217-228; the sequence is AVATLMLSLGGY. A helical transmembrane segment spans residues 229–247; it reads AGYKYLVVAAAVSVWWLGM. The Cytoplasmic portion of the chain corresponds to 248–268; it reads ALRGYKVADDRIWARKLFGFS. The chain crosses the membrane as a helical span at residues 269-287; the sequence is IIAITALSVMMSVDFMVPD. Residues 288 to 296 lie on the Periplasmic side of the membrane; that stretch reads SHTLLAAVW.

The protein belongs to the UbiA prenyltransferase family. Protoheme IX farnesyltransferase subfamily.

It is found in the cell inner membrane. It carries out the reaction heme b + (2E,6E)-farnesyl diphosphate + H2O = Fe(II)-heme o + diphosphate. The protein operates within porphyrin-containing compound metabolism; heme O biosynthesis; heme O from protoheme: step 1/1. In terms of biological role, converts heme B (protoheme IX) to heme O by substitution of the vinyl group on carbon 2 of heme B porphyrin ring with a hydroxyethyl farnesyl side group. The chain is Protoheme IX farnesyltransferase from Shigella sonnei (strain Ss046).